A 236-amino-acid polypeptide reads, in one-letter code: Leucyl/phenylalanyl-tRNA--protein transferase (236 aa).

Belongs to the L/F-transferase family.

The protein localises to the cytoplasm. The enzyme catalyses N-terminal L-lysyl-[protein] + L-leucyl-tRNA(Leu) = N-terminal L-leucyl-L-lysyl-[protein] + tRNA(Leu) + H(+). It carries out the reaction N-terminal L-arginyl-[protein] + L-leucyl-tRNA(Leu) = N-terminal L-leucyl-L-arginyl-[protein] + tRNA(Leu) + H(+). The catalysed reaction is L-phenylalanyl-tRNA(Phe) + an N-terminal L-alpha-aminoacyl-[protein] = an N-terminal L-phenylalanyl-L-alpha-aminoacyl-[protein] + tRNA(Phe). Functionally, functions in the N-end rule pathway of protein degradation where it conjugates Leu, Phe and, less efficiently, Met from aminoacyl-tRNAs to the N-termini of proteins containing an N-terminal arginine or lysine. In Shewanella putrefaciens (strain CN-32 / ATCC BAA-453), this protein is Leucyl/phenylalanyl-tRNA--protein transferase.